We begin with the raw amino-acid sequence, 122 residues long: Large ribosomal subunit protein bL12 (122 aa).

The disordered stretch occupies residues 94–122 (GNVKEGLSKEDAEEMKEKLEEAGATVELK). A compositionally biased stretch (basic and acidic residues) spans 99-114 (GLSKEDAEEMKEKLEE).

This sequence belongs to the bacterial ribosomal protein bL12 family. In terms of assembly, homodimer. Part of the ribosomal stalk of the 50S ribosomal subunit. Forms a multimeric L10(L12)X complex, where L10 forms an elongated spine to which 2 to 4 L12 dimers bind in a sequential fashion. Binds GTP-bound translation factors.

Functionally, forms part of the ribosomal stalk which helps the ribosome interact with GTP-bound translation factors. Is thus essential for accurate translation. In Halanaerobium praevalens, this protein is Large ribosomal subunit protein bL12.